Consider the following 262-residue polypeptide: Trypsin eta (262 aa).

Positions 1–22 are cleaved as a signal peptide; that stretch reads MNKVILRILAVLFLLGIYAVSA. Residues 23 to 27 constitute a propeptide, activation peptide; sequence QSDGR. A Peptidase S1 domain is found at 28 to 259; that stretch reads IVGGADTSSY…YKDWIAKQRT (232 aa). Residues Cys59 and Cys75 are joined by a disulfide bond. Catalysis depends on charge relay system residues His74 and Asp120. Intrachain disulfides connect Cys185–Cys200 and Cys211–Cys235. Catalysis depends on Ser215, which acts as the Charge relay system.

This sequence belongs to the peptidase S1 family.

The protein resides in the secreted. It localises to the extracellular space. It catalyses the reaction Preferential cleavage: Arg-|-Xaa, Lys-|-Xaa.. This chain is Trypsin eta (etaTry), found in Drosophila melanogaster (Fruit fly).